The following is a 524-amino-acid chain: Na(+)/H(+) antiporter NhaB (524 aa).

12 helical membrane-spanning segments follow: residues isoleucine 23–alanine 43, glycine 44–leucine 64, leucine 97–phenylalanine 117, leucine 120–phenylalanine 140, phenylalanine 144–isoleucine 164, leucine 203–proline 223, phenylalanine 236–leucine 256, alanine 304–isoleucine 324, phenylalanine 354–phenylalanine 374, leucine 392–valine 412, alanine 448–isoleucine 468, and valine 476–phenylalanine 496.

The protein belongs to the NhaB Na(+)/H(+) (TC 2.A.34) antiporter family.

Its subcellular location is the cell inner membrane. The catalysed reaction is 2 Na(+)(in) + 3 H(+)(out) = 2 Na(+)(out) + 3 H(+)(in). Na(+)/H(+) antiporter that extrudes sodium in exchange for external protons. The protein is Na(+)/H(+) antiporter NhaB of Edwardsiella ictaluri (strain 93-146).